The sequence spans 271 residues: Type III pantothenate kinase (271 aa).

6-13 (DVRNTHTV) lines the ATP pocket. Substrate is bound at residue 109–112 (GADR). Aspartate 111 serves as the catalytic Proton acceptor. Aspartate 131 is a K(+) binding site. Position 134 (serine 134) interacts with ATP. Threonine 186 serves as a coordination point for substrate.

It belongs to the type III pantothenate kinase family. In terms of assembly, homodimer. It depends on NH4(+) as a cofactor. K(+) serves as cofactor.

It localises to the cytoplasm. It catalyses the reaction (R)-pantothenate + ATP = (R)-4'-phosphopantothenate + ADP + H(+). It functions in the pathway cofactor biosynthesis; coenzyme A biosynthesis; CoA from (R)-pantothenate: step 1/5. Catalyzes the phosphorylation of pantothenate (Pan), the first step in CoA biosynthesis. This chain is Type III pantothenate kinase, found in Mycolicibacterium smegmatis (strain ATCC 700084 / mc(2)155) (Mycobacterium smegmatis).